Reading from the N-terminus, the 153-residue chain is Protein-export protein SecB (153 aa).

Belongs to the SecB family. In terms of assembly, homotetramer, a dimer of dimers. One homotetramer interacts with 1 SecA dimer.

It is found in the cytoplasm. One of the proteins required for the normal export of preproteins out of the cell cytoplasm. It is a molecular chaperone that binds to a subset of precursor proteins, maintaining them in a translocation-competent state. It also specifically binds to its receptor SecA. This is Protein-export protein SecB from Erwinia tasmaniensis (strain DSM 17950 / CFBP 7177 / CIP 109463 / NCPPB 4357 / Et1/99).